Here is a 196-residue protein sequence, read N- to C-terminus: Potassium-transporting ATPase KdpC subunit (196 aa).

Residues 7-27 traverse the membrane as a helical segment; the sequence is PAIVSAGLFTVLLGLAYPLAV.

This sequence belongs to the KdpC family. In terms of assembly, the system is composed of three essential subunits: KdpA, KdpB and KdpC.

It is found in the cell inner membrane. In terms of biological role, part of the high-affinity ATP-driven potassium transport (or Kdp) system, which catalyzes the hydrolysis of ATP coupled with the electrogenic transport of potassium into the cytoplasm. This subunit acts as a catalytic chaperone that increases the ATP-binding affinity of the ATP-hydrolyzing subunit KdpB by the formation of a transient KdpB/KdpC/ATP ternary complex. This chain is Potassium-transporting ATPase KdpC subunit, found in Caulobacter sp. (strain K31).